The following is a 414-amino-acid chain: CinA-like protein (414 aa).

This sequence belongs to the CinA family.

This Acidobacterium capsulatum (strain ATCC 51196 / DSM 11244 / BCRC 80197 / JCM 7670 / NBRC 15755 / NCIMB 13165 / 161) protein is CinA-like protein.